Consider the following 232-residue polypeptide: Large ribosomal subunit protein uL1 (232 aa).

Belongs to the universal ribosomal protein uL1 family. As to quaternary structure, part of the 50S ribosomal subunit.

In terms of biological role, binds directly to 23S rRNA. The L1 stalk is quite mobile in the ribosome, and is involved in E site tRNA release. Its function is as follows. Protein L1 is also a translational repressor protein, it controls the translation of the L11 operon by binding to its mRNA. In Ruegeria pomeroyi (strain ATCC 700808 / DSM 15171 / DSS-3) (Silicibacter pomeroyi), this protein is Large ribosomal subunit protein uL1.